Reading from the N-terminus, the 393-residue chain is Exosome complex component RRP45 (393 aa).

Residues 1–268 (MRDTPLSNCE…SEITELINKA (268 aa)) form an ARE binding region.

Belongs to the RNase PH family. As to quaternary structure, component of the RNA exosome complex.

It localises to the cytoplasm. Its subcellular location is the nucleus. The protein localises to the nucleolus. It is found in the nucleoplasm. Functionally, non-catalytic component of the RNA exosome complex which has 3'-&gt;5' exoribonuclease activity and participates in a multitude of cellular RNA processing and degradation events. In the nucleus, the RNA exosome complex is involved in proper maturation of stable RNA species such as rRNA, snRNA and snoRNA, in the elimination of RNA processing by-products and non-coding 'pervasive' transcripts, such as antisense RNA species and promoter-upstream transcripts (PROMPTs), and of mRNAs with processing defects, thereby limiting or excluding their export to the cytoplasm. In the cytoplasm, the RNA exosome complex is involved in general mRNA turnover and specifically degrades inherently unstable mRNAs containing AU-rich elements (AREs) within their 3' untranslated regions, and in RNA surveillance pathways, preventing translation of aberrant mRNAs. The sequence is that of Exosome complex component RRP45 from Danio rerio (Zebrafish).